We begin with the raw amino-acid sequence, 156 residues long: Snaclec A1 (156 aa).

The first 23 residues, 1–23, serve as a signal peptide directing secretion; sequence MGRSISVSFGLLVVFLSLSGTGA. 3 disulfide bridges follow: cysteine 27–cysteine 38, cysteine 55–cysteine 154, and cysteine 129–cysteine 146. Residues 34-155 form the C-type lectin domain; it reads HEGHCYKVFN…CGQPYRFTCE (122 aa).

It belongs to the snaclec family. Heterodimer; disulfide-linked. Expressed by the venom gland.

The protein resides in the secreted. In terms of biological role, interferes with one step of hemostasis (modulation of platelet aggregation, or coagulation cascade, for example). The protein is Snaclec A1 of Macrovipera lebetinus (Levantine viper).